The sequence spans 365 residues: MSSTMRGWVRQHRGPYESSLKLIDSLPVPPDPGSDSSDIIVRVSYVALEFSIAHIMGIFPALPFAPPLVPEICVSGTVASAGGKAPEELRQPGTQVLAMTDPMSMMLFGTGALKEYMRLPEQYVVPLLQPSHSVTTDHPHGTAERPQALTLAEGAGLISNGSAAQAVVRAANVLSGQRVLVNGASGSVGHIVSQLCRARGAYVVGVASGVNQDFVRRYGCNEFVDYTKHTDLPEYLASTYGSQPFDSILDCVGSQDLYANSPRYLLPGRPLVNIGAFSMTDSLLSTLYQWSMNSWCPTWLGGVPRPYILFSNTPDMQGVLSLVEMVQQGKLKVHIDSEFEMEDLIKAYERVTSKRARGKVLIRIH.

Positions 21–362 constitute an Enoyl reductase (ER) domain; sequence KLIDSLPVPP…SKRARGKVLI (342 aa). NADP(+)-binding positions include 185–188, Y226, 274–275, and 354–355; these read SGSV, IG, and KR.

It belongs to the zinc-containing alcohol dehydrogenase family. Monomer.

Its pathway is mycotoxin biosynthesis. Its function is as follows. Medium chain reductase; part of the gene cluster that mediates the biosynthesis of pyrrocidines, fungal natural products containing a macrocyclic para-cyclophane connected to a decahydrofluorene ring system that show potent antibiotic activities toward Gram-negative bacteria. Within the pathway, pydE functions synergistically with pydB, pydX and pydZ to form the cyclophane. The pathway begins with the PKS-NRPS pydA which, with the help of the trans-enoyl reductase pydC, synthesizes the polyketide-tyrosyl acyl thioester product which can be reductively off-loaded by the terminal reductase (R) domain in pydA. The alpha/beta hydrolase pydG is then required to catalyze the subsequent Knoevenagel condensation that affords the 3-pyrrolin-2-one ring, whereas the four proteins pydB, pydE, pydX and pydZ then function synergistically to form the cyclophane. PydB and the membrane-bound pydX and pydZ are lipid-binding proteins that can sequester and mold the pdyG product into the inverse S-shape. Binding of the medium chain reductase pydE to the complex would trigger the cascade oxidative cyclization. PydY is involved in the Diels-Alder cycloaddition that forms the decahydrofluorene core. Additional non-enzymatic hydroxylation yields pyrrocidine A2 which can be further reduced into pyrrocidine B by an endogenous reductase. The sequence is that of Medium chain reductase pydE from Acremonium sp.